A 202-amino-acid polypeptide reads, in one-letter code: Crustacean calcium-binding protein 23 (202 aa).

Ser1 bears the N-acetylserine mark. EF-hand domains follow at residues 33–68, 69–104, 105–140, and 148–185; these read SGLLSLGRLFRRLDKDRSWTLSKEELSRGVGQFGLD, LSDGDINKLFSSFEKDGQSGINYEEFLESLRPEMTE, PRKKAVEAAFKHLDKTGDGVVGLEDIKGKYSAKTHP, and TEDEILKKFLNMFETNTSVDGKVTKKEFFDYYSGLSKA. Asp84, Glu93, Asp118, Asp122, and Asp129 together coordinate Ca(2+).

As to quaternary structure, monomer or disulfide-linked dimers. As to expression, striated muscle and brain.

Possibly acts as a regulatory protein and not as a calcium buffer or transport protein. The sequence is that of Crustacean calcium-binding protein 23 from Faxonius limosus (Spinycheek crayfish).